The following is a 194-amino-acid chain: Cyclin-dependent kinase inhibitor 4 (194 aa).

Residues 49-58 (LELRSRRLEK) are compositionally biased toward basic and acidic residues. Disordered regions lie at residues 49–70 (LELR…PRRR) and 107–139 (TRET…SHCK).

Belongs to the CDI family. ICK/KRP subfamily.

This is Cyclin-dependent kinase inhibitor 4 (KRP4) from Oryza sativa subsp. japonica (Rice).